The following is an 848-amino-acid chain: ATP-dependent Clp protease ATP-binding subunit ClpC1 (848 aa).

Positions 2 to 144 (FERFTDRARR…RQQVIQLLSG (143 aa)) constitute a Clp R domain. Repeat stretches follow at residues 5 to 70 (FTDR…IGQG) and 80 to 144 (FTPR…LLSG). The segment at 171-418 (LDQFGRNLTA…RMRIRRMTAP (248 aa)) is i. 216 to 223 (GEPGVGKT) is a binding site for ATP. Positions 425–460 (DEKIAEARREKESAIDAQDFEKAASLRDREKTLVAQ) constitute a UVR domain. Residues 479–670 (VDDEQIAEVL…VLIFTSNLGT (192 aa)) form an II region. 553 to 560 (GPSGVGKT) contributes to the ATP binding site. A disordered region spans residues 821–848 (TGTRKPPAEPDLAKAGAHSAGGPEPAAR).

The protein belongs to the ClpA/ClpB family. ClpC subfamily.

In terms of biological role, ATP-dependent specificity component of the Clp protease. It directs the protease to specific substrates. Can perform chaperone functions in the absence of ClpP. Degrades anti-sigma-E factor RseA in the presence of ClpP2. The polypeptide is ATP-dependent Clp protease ATP-binding subunit ClpC1 (clpC1) (Mycobacterium tuberculosis (strain ATCC 25618 / H37Rv)).